The primary structure comprises 609 residues: MSKIIGIDLGTTNSCVAVLEGGEPKVIPNPEGNRTTPSVVAFKNGERLVGEVAKRQAITNPNTIISIKRHMGTDYKVEIEGKKYTPQEISAIILQYLKSYAEDYLGEPVTRAVITVPAYFNDAQRQATKDAGRIAGLEVERIINEPTAAALAYGLDKEEDQTILVYDLGGGTFDVSILELGDGVFEVKATAGDNHLGGDDFDQVIIDYLVEQFKQEHGIDLSKDKMALQRLKDAAEKAKKELSGVTQTQISLPFISANETGPLHLETTLTRAKFEELSAHLVERTMGPVRQALQDAGLTPSDIDKVILVGGSTRIPAVQEAIKRELGKEPHKGVNPDEVVAIGAAIQGGVIAGEVKDVVLLDVTPLSLGIETMGGVFTKLIERNTTIPTSKSQIFTTAADNQTTVDIHVLQGERPMAADNKTLGRFQLTDIPPAPRGVPQIEVTFDIDANGIVHVRAKDLGTNKEQSITIKSSSGLSEEEIQRMIKEAEENAEADRKRKEAAELRNEADQLVFTTEKTLKEVEGKVDEAEVKKAQEAKDALKAALEKNDIDDIRKKKEALQEIVQQLSIKLYEQAAKQAQAQQQAGAGGAAKKDENVVDAEFEEVKDDK.

Thr172 carries the post-translational modification Phosphothreonine; by autocatalysis. A disordered region spans residues 578 to 609 (QAQAQQQAGAGGAAKKDENVVDAEFEEVKDDK). Over residues 597–609 (VVDAEFEEVKDDK) the composition is skewed to acidic residues.

It belongs to the heat shock protein 70 family.

Functionally, acts as a chaperone. This chain is Chaperone protein DnaK, found in Geobacillus sp. (strain WCH70).